A 397-amino-acid polypeptide reads, in one-letter code: Tryptophan synthase beta chain (397 aa).

Residue Lys-87 is modified to N6-(pyridoxal phosphate)lysine.

This sequence belongs to the TrpB family. Tetramer of two alpha and two beta chains. Pyridoxal 5'-phosphate is required as a cofactor.

The catalysed reaction is (1S,2R)-1-C-(indol-3-yl)glycerol 3-phosphate + L-serine = D-glyceraldehyde 3-phosphate + L-tryptophan + H2O. It participates in amino-acid biosynthesis; L-tryptophan biosynthesis; L-tryptophan from chorismate: step 5/5. Its function is as follows. The beta subunit is responsible for the synthesis of L-tryptophan from indole and L-serine. The polypeptide is Tryptophan synthase beta chain (Salmonella arizonae (strain ATCC BAA-731 / CDC346-86 / RSK2980)).